Reading from the N-terminus, the 1597-residue chain is Glucosyltransferase-I (1597 aa).

Residues 1-38 form the signal peptide; that stretch reads MEKNERFKMHKVKKRWVTISVASATMLASALGASVASA. Residues 52 to 120 form a disordered region; the sequence is LTADQTTTNQ…QTTTNANEAK (69 aa). Low complexity predominate over residues 53 to 114; it reads TADQTTTNQD…STDTAAQTTT (62 aa). 2 Cell wall-binding repeats span residues 157 to 176 and 178 to 197; these read MSNVKQVDGKYYYYDQDGNV and KNFAVSVGEKIYYFDETGAY. Residues 200 to 1050 form a catalytic; approximate region; it reads TSKVEADKSG…DQASNKYLNV (851 aa). Cell wall-binding repeat units follow at residues 1089-1108, 1109-1128, 1130-1150, 1152-1172, 1173-1191, 1193-1214, 1216-1236, 1237-1256, 1258-1279, 1281-1301, 1302-1321, 1323-1343, 1344-1365, 1366-1380, 1415-1434, 1436-1457, 1459-1478, 1485-1505, 1508-1527, 1528-1547, 1549-1570, and 1572-1591; these read TDSFITEAGNLYYFGQDGYM, VTGAQNIKGSNYYFLANGAA, RNTVYTDAQGQNHYYGNDGKR, ENGYQQFGNDSWRYFKNGVMA, LGLTTVDGHVQYFDKDGVQ, KDKIIVTRDGKVRYFDQHNGNA, TNTFVADKTGHWYYLGKDGVA, VTGAQTVGKQHLYFEANGQQ, KGDFVTAKDGKLYFYDVDSGDM, TNTFIEDKAGNWFYLGKDGAA, VTGAQTIKGQKLYFKANGQQ, KGDIVKDADGKIRYYDAQTGE, QVFNKSVSVNGKTYYFGSDGTA, QTQANPKGQTFKDGS, LTGAQTIGNQRVYFKDNGHQ, KGQLVTGNDGKLRYYDANSGDQ, FNKSVTVNGKTYYFGSDGTA, KGQTFKDGSGVLRFYNLEGQY, GSGWYKNAQGQWLYVKDGKV, LTGLQTVGNQKVYFDKNGIQ, KGKAVRTSDGKVRYFDENSGSM, and TNQWKFVYGQYYYFGSDGAA. A glucan-binding; approximate region spans residues 1099–1597; it reads LYYFGQDGYM…DGAAVYRGWN (499 aa).

The protein belongs to the glycosyl hydrolase 70 family.

It localises to the secreted. The catalysed reaction is [(1-&gt;6)-alpha-D-glucosyl](n) + sucrose = [(1-&gt;6)-alpha-D-glucosyl](n+1) + D-fructose. Production of extracellular glucans, that are thought to play a key role in the development of the dental plaque because of their ability to adhere to smooth surfaces and mediate the aggregation of bacterial cells and food debris. This chain is Glucosyltransferase-I (gtfI), found in Streptococcus downei (Streptococcus sobrinus).